Consider the following 445-residue polypeptide: Putative ATP-dependent RNA helicase L538 (445 aa).

One can recognise a Helicase ATP-binding domain in the interval 14–151; that stretch reads IEFMKNNRGV…AVLVNIVRGE (138 aa). 27 to 34 contributes to the ATP binding site; that stretch reads HSTGAGKT. A DEAH box motif is present at residues 101–104; sequence DEAH. One can recognise a Helicase C-terminal domain in the interval 273 to 442; that stretch reads KIEDIMKYII…VIDASIENNY (170 aa).

It belongs to the DEAD box helicase family. DEAH subfamily.

Its subcellular location is the virion. The catalysed reaction is ATP + H2O = ADP + phosphate + H(+). This Acanthamoeba polyphaga mimivirus (APMV) protein is Putative ATP-dependent RNA helicase L538.